Here is a 53-residue protein sequence, read N- to C-terminus: MCSYYHMKKRSVSGCNITIFAVMFSHLSAGKSPCGNQANVLCISRLEFVQYQS.

A signal peptide spans 1 to 30 (MCSYYHMKKRSVSGCNITIFAVMFSHLSAG).

Its subcellular location is the secreted. Its function is as follows. Enhances IgA secretion from B-cells stimulated via CD40. In Homo sapiens (Human), this protein is IgA-inducing protein homolog (IGIP).